Consider the following 330-residue polypeptide: Aspartate--ammonia ligase (330 aa).

It belongs to the class-II aminoacyl-tRNA synthetase family. AsnA subfamily.

It is found in the cytoplasm. The enzyme catalyses L-aspartate + NH4(+) + ATP = L-asparagine + AMP + diphosphate + H(+). It participates in amino-acid biosynthesis; L-asparagine biosynthesis; L-asparagine from L-aspartate (ammonia route): step 1/1. The polypeptide is Aspartate--ammonia ligase (Streptococcus pyogenes serotype M3 (strain ATCC BAA-595 / MGAS315)).